Here is a 667-residue protein sequence, read N- to C-terminus: MLTHKTCQARKKMQVSFVIRDAEEKQHRNGVNALQLDSNNGKLYSAGRDAIIRVWNTRTESNDKYIQSMEHHNDWVNDIVLCCNGRNLISASCDTTVKVWNAHKGFCMSTLRTHRDYVQALAYAKDREQVASAGLDKAIFLWDVNTLTALTASNNTVTTSSLTGSKDSIYSLAMNPSGTVIVSGSTENILRIWDPRTCMRSMKLRGHTENVRCLVVSPDGNQVVSGSSDGTIKVWNLGQQRCIQTIHVHKEGVWSLLMSENFQYIISGSRDRNIIVTEMRNPSNKMLVCEEKAPVLSLGYNIDKTGVWATTWNSDIRCWKLPMYDRCTLSSGGMDAQWTMGGTELACIKGGAAIKECTVLNDKRYIITKDSQDQVVVYDVLRVIKKEELGPVDYEEEVKKRNKQVYIPNWFTVDLKTGMPTIVLGQEEVDCFAAWVSIEAGLPECDDPTTEIKINYGKLLLEALLEYWTPPHSMPPNEMEPDVRGNGYFQVPKHTPVIFSEVGGRTVCRLLVRDAAGDSESTLLHETAPQWVTDVVIERNIPKFLKIPFFLQPHPQMTKPERTKKDRLVANEFIQCRKVCEHVLEKVLNAETTPSGGNANNSLQNSQSDANSEGSQLPAEERIELWCNDVIVDPNMDLRTVRHFIWKQSTDLTFQYKTKQNFNFDGK.

WD repeat units follow at residues 26-65 (QHRN…NDKY), 71-110 (HHND…CMST), 113-152 (THRD…ALTA), 164-203 (GSKD…RSMK), 206-245 (GHTE…CIQT), 248-287 (VHKE…NKML), 290-329 (EEKA…RCTL), and 349-388 (KGGA…KKEE). The disordered stretch occupies residues 591–615 (ETTPSGGNANNSLQNSQSDANSEGS).

This sequence belongs to the WD repeat WDR48 family. As to quaternary structure, catalytic component of the Usp12-46 deubiquitylase complex consisting of Usp12-46, Wdr20 and Uaf1; regulatory subunit that, together wtih Wdr20, stabilizes Usp12-46. The Usp12-46 deubiquitylase complex associates with arr/arrow; the interaction leads to deubiquitination and stabilization of arr/arrow.

Regulatory component of the Usp12-46 deubiquitylase complex. activates deubiquitination by increasing the catalytic turnover without increasing the affinity of deubiquitinating enzymes for the substrate. The complex deubiquitylates the wg/wingless-signaling receptor arr/arrow, which stabilizes the receptor and increases its concentration at the cell surface; this enhances the sensitivity of cells to wg/wingless-signal stimulation. This increases the amplitude and spatial range of the signaling response to the wg/wingless morphogen gradient, facilitating the precise concentration-dependent regulation of its target genes. Together with Wdr20 and Usp12-46 required for wg/wingless-mediated signaling in the wing imaginal disc and for wg/wingless-dependent regulation of intestinal stem cell proliferation. The protein is WD repeat-containing protein 48 homolog of Drosophila virilis (Fruit fly).